Here is a 207-residue protein sequence, read N- to C-terminus: B2 protein (207 aa).

The segment at 1-68 is disordered; sequence MIDQEESNFN…FKTLPPAESL (68 aa). Composition is skewed to low complexity over residues 8–26 and 35–52; these read NFNF…QFHG and KNNN…GENK. The 133-residue stretch at 72–204 folds into the DCD domain; the sequence is ETVGGYIFVC…AISLLDIFEE (133 aa).

In Daucus carota (Wild carrot), this protein is B2 protein.